A 426-amino-acid polypeptide reads, in one-letter code: Histidine--tRNA ligase (426 aa).

It belongs to the class-II aminoacyl-tRNA synthetase family.

The protein localises to the cytoplasm. It catalyses the reaction tRNA(His) + L-histidine + ATP = L-histidyl-tRNA(His) + AMP + diphosphate + H(+). The sequence is that of Histidine--tRNA ligase from Saccharolobus islandicus (strain Y.G.57.14 / Yellowstone #1) (Sulfolobus islandicus).